Consider the following 485-residue polypeptide: Probable protein phosphatase 2C 3 (485 aa).

The span at 1-11 (MSSPSPSSEAA) shows a compositional bias: low complexity. Disordered stretches follow at residues 1–29 (MSSPSPSSEAAAAHHHHHQRRQHAGAAGG) and 43–72 (ARAERPMGSGSRICARDEEDGGGGGGAEGG). Residues 13–23 (AHHHHHQRRQH) are compositionally biased toward basic residues. Residues 107 to 353 (SSSSSSSLAS…DDTTCIVVDM (247 aa)) form the PPM-type phosphatase domain. Residues aspartate 129, glycine 130, aspartate 305, and aspartate 344 each coordinate Mn(2+).

Belongs to the PP2C family. Requires Mg(2+) as cofactor. Mn(2+) serves as cofactor.

The enzyme catalyses O-phospho-L-seryl-[protein] + H2O = L-seryl-[protein] + phosphate. It catalyses the reaction O-phospho-L-threonyl-[protein] + H2O = L-threonyl-[protein] + phosphate. The polypeptide is Probable protein phosphatase 2C 3 (Oryza sativa subsp. japonica (Rice)).